The primary structure comprises 290 residues: RxLR effector protein Avr4 (290 aa).

An N-terminal signal peptide occupies residues 1-24 (MRSLHILLVITASLLASLAVSAEA). The disordered stretch occupies residues 33 to 56 (VVENNKDKSRFLRDGGTTEAQTDE). Residues 36–45 (NNKDKSRFLR) are compositionally biased toward basic and acidic residues. Residues 42 to 58 (RFLRDGGTTEAQTDEER) carry the RxLR-dEER motif. Positions 118 to 141 (KYERMQWQKLNEGQTLTYMRVGDR) are W1 motif. The interval 151–174 (QLLRWVAQKKTVKSVYDDLQIEGF) is W2 motif. Positions 224-247 (VFEKWAMEGTHIKSVIKTLNLNNK) are W3 motif. N246 is a glycosylation site (N-linked (GlcNAc...) asparagine). Residues 249–270 (ASEMANNENFPALLKYVKLYLD) are y motif.

It belongs to the RxLR effector family.

Its subcellular location is the secreted. The protein resides in the host cytoplasm. It is found in the host nucleus. It localises to the host nucleolus. The protein localises to the host cytoskeleton. Secreted effector that acts as an elicitor of hypersensitive response (HR) specifically on plants carrying defense protein R4, through its interaction with this protein. The polypeptide is RxLR effector protein Avr4 (Phytophthora mirabilis).